The chain runs to 193 residues: Outer membrane lipoprotein DolP (193 aa).

The first 21 residues, 1-21 (MTLSPLKKLAILLGATIFLQG), serve as a signal peptide directing secretion. The N-palmitoyl cysteine moiety is linked to residue cysteine 22. Cysteine 22 carries S-diacylglycerol cysteine lipidation. BON domains follow at residues 48–117 (DDET…TVSP) and 126–193 (KDSW…KYLD).

Belongs to the lipoprotein DolP family.

The protein localises to the cell outer membrane. Its function is as follows. Plays an important role in maintaining outer membrane integrity. The sequence is that of Outer membrane lipoprotein DolP from Haemophilus influenzae (strain ATCC 51907 / DSM 11121 / KW20 / Rd).